Here is an 87-residue protein sequence, read N- to C-terminus: uncharacterized protein (87 aa).

The first 19 residues, 1–19, serve as a signal peptide directing secretion; that stretch reads MLVLLVAVLVTAVYAFVHA. Residues 39 to 59 form a helical membrane-spanning segment; that stretch reads LVILGAAVALASILYPVLGVL.

To M.leprae ML2453.

The protein resides in the membrane. This is an uncharacterized protein from Mycobacterium bovis (strain ATCC BAA-935 / AF2122/97).